We begin with the raw amino-acid sequence, 276 residues long: SKA complex subunit 1 homolog (276 aa).

Residues 48 to 78 adopt a coiled-coil conformation; that stretch reads VDVSLTAMEAQLQAVRRRLQEEREAFPKAKK.

This sequence belongs to the SKA1 family.

The chain is SKA complex subunit 1 homolog from Oryza sativa subsp. japonica (Rice).